The chain runs to 280 residues: Polyamine aminopropyltransferase (280 aa).

The region spanning 3 to 237 is the PABS domain; it reads DVYFMERDPY…YWWSFSVGSK (235 aa). Glutamine 33 is a binding site for S-methyl-5'-thioadenosine. The spermidine site is built by histidine 64 and aspartate 88. S-methyl-5'-thioadenosine-binding positions include aspartate 108 and 139–140; that span reads DG. Catalysis depends on aspartate 157, which acts as the Proton acceptor. 157-160 contributes to the spermidine binding site; it reads DSTD.

It belongs to the spermidine/spermine synthase family. As to quaternary structure, homodimer or homotetramer.

The protein localises to the cytoplasm. It catalyses the reaction S-adenosyl 3-(methylsulfanyl)propylamine + putrescine = S-methyl-5'-thioadenosine + spermidine + H(+). Its pathway is amine and polyamine biosynthesis; spermidine biosynthesis; spermidine from putrescine: step 1/1. In terms of biological role, catalyzes the irreversible transfer of a propylamine group from the amino donor S-adenosylmethioninamine (decarboxy-AdoMet) to putrescine (1,4-diaminobutane) to yield spermidine. In Hydrogenobaculum sp. (strain Y04AAS1), this protein is Polyamine aminopropyltransferase.